Reading from the N-terminus, the 1223-residue chain is DNA-directed RNA polymerase subunit beta' (1223 aa).

Zn(2+)-binding residues include Cys-60, Cys-62, Cys-75, and Cys-78. Mg(2+) is bound by residues Asp-449, Asp-451, and Asp-453. 4 residues coordinate Zn(2+): Cys-818, Cys-892, Cys-899, and Cys-902.

It belongs to the RNA polymerase beta' chain family. The RNAP catalytic core consists of 2 alpha, 1 beta, 1 beta' and 1 omega subunit. When a sigma factor is associated with the core the holoenzyme is formed, which can initiate transcription. The cofactor is Mg(2+). Zn(2+) is required as a cofactor.

The catalysed reaction is RNA(n) + a ribonucleoside 5'-triphosphate = RNA(n+1) + diphosphate. Its function is as follows. DNA-dependent RNA polymerase catalyzes the transcription of DNA into RNA using the four ribonucleoside triphosphates as substrates. This chain is DNA-directed RNA polymerase subunit beta', found in Lactobacillus gasseri (strain ATCC 33323 / DSM 20243 / BCRC 14619 / CIP 102991 / JCM 1131 / KCTC 3163 / NCIMB 11718 / NCTC 13722 / AM63).